The primary structure comprises 1778 residues: Nuclear receptor corepressor 1 (1778 aa).

Residues 125-176 (DRLEEWSPEERSLFKSRQADHVKIFHGLTEFFVDKTASDLVLFYYMNKKTED) form the SANT domain. A Myb-like domain is found at 356-398 (WTDDEKTKLVTLINSSPTLDWVSISEGMNRRPNECKMQYDAMN). Acidic residues predominate over residues 409–421 (VDEEDGNGQEEGG). Disordered stretches follow at residues 409 to 671 (VDEE…TVST), 992 to 1024 (SLTP…AGRS), 1195 to 1218 (KLQQ…ATPQ), 1276 to 1339 (QHLQ…SRSV), 1414 to 1434 (PPKT…RTLS), and 1646 to 1718 (AAPT…PPLP). 2 stretches are compositionally biased toward low complexity: residues 431–442 (SSAAARRSGLAR) and 450–469 (TPRA…VTRA). Acidic residues predominate over residues 478–493 (DLGEEIDEMEIEDNDE). Residues 494–513 (DASRGSRGKDSKAPSDRDGS) are compositionally biased toward basic and acidic residues. Composition is skewed to acidic residues over residues 517–545 (MEGD…EEEE) and 599–616 (ESDD…DVDE). Low complexity-rich tracts occupy residues 626–639 (SSSS…SVGG) and 649–671 (LVQQ…TVST). A compositionally biased stretch (low complexity) spans 1276–1285 (QHLQQQQQHH). Over residues 1687 to 1696 (SSVNSNVSDV) the composition is skewed to low complexity.

It belongs to the N-CoR nuclear receptor corepressors family. Interacts with gex-3. Interacts (via C-terminus) with nhr-60. In larvae, expressed in pharyngeal neurons, ventral and dorsal nerve cords, tail neurons, egg-laying neurons and egg-laying muscles. Detected in the neurons of the pharyngeal nerve ring, head neurons, tail neurons and egg-laying muscles in adults. Detected in male-specific tail ganglia and rays in males.

The protein resides in the nucleus. Functionally, mediates transcriptional repression by certain nuclear receptors. Plays a role in development and neuronal function. May play a role in muscle-specific oxidative mitochondrial metabolism. The chain is Nuclear receptor corepressor 1 from Caenorhabditis elegans.